The sequence spans 569 residues: Atlastin-2 (569 aa).

The interval 1 to 49 (MAEGGSLRNRTRFGSRSNEAMNHVDYPDENFVEEIQLNSDTEVMEKPRP) is N-terminal hypervariable region (HVR). Residues 1–464 (MAEGGSLRNR…NIFYAARTPA (464 aa)) are Cytoplasmic-facing. Residues 80–324 (DLNVVVLSVA…LVPLLLAPEN (245 aa)) form the GB1/RHD3-type G domain. GDP-binding residues include Arg93, Lys94, Gly95, Lys96, Ser97, Phe98, Gln163, Arg232, and Asp233. The GTP site is built by Arg93, Lys94, Gly95, Lys96, Ser97, and Phe98. Ser97 provides a ligand contact to Mg(2+). 2 residues coordinate GTP: Arg232 and Asp233. Residues 244 to 272 (LEGGNKFLEKRLQVKQNQHEELQNVRKHI) are a coiled coil. Residues Val291 and Asn294 each contribute to the GDP site. Residue Val291 participates in GTP binding. A 3HB (three-helix bundle) domain region spans residues 362 to 453 (MLQATAEANN…YANFLKHNDG (92 aa)). A linker region spans residues 454–462 (KNIFYAART). A helical transmembrane segment spans residues 465 to 485 (TLFAVMFAMYIISGLTGFIGM). Residues 486 to 487 (NS) are Lumenal-facing. A helical transmembrane segment spans residues 488–508 (IATICNLIMGLTLLSFCTWAY). Topologically, residues 509 to 569 (VKYSGEFREL…DQVSGRLKTN (61 aa)) are cytoplasmic. The tract at residues 535 to 569 (KPLSDNLMEDNIRQTVRNSIKAGLTDQVSGRLKTN) is autoinhibitory domain.

The protein belongs to the TRAFAC class dynamin-like GTPase superfamily. GB1/RHD3 GTPase family. GB1 subfamily. Monomeric and homodimeric. The homodimer, transiently formed by two molecules on opposing membranes, is the active form mediating ER membrane fusion.

Its subcellular location is the endoplasmic reticulum membrane. It carries out the reaction GTP + H2O = GDP + phosphate + H(+). Atlastin-2 (ATL2) is a membrane-anchored GTPase that mediates the GTP-dependent fusion of endoplasmic reticulum (ER) membranes, maintaining the continuous ER network. It facilitates the formation of three-way junctions where ER tubules intersect. Two atlastin-2 on neighboring ER tubules bind GTP and form loose homodimers through the GB1/RHD3-type G domains and 3HB regions. Upon GTP hydrolysis, the 3HB regions tighten, pulling the membranes together to drive their fusion. After fusion, the homodimer disassembles upon release of inorganic phosphate (Pi). Subsequently, GDP dissociates, resetting the monomers to a conformation ready for a new fusion cycle. The protein is Atlastin-2 (atl2) of Xenopus laevis (African clawed frog).